A 216-amino-acid chain; its full sequence is 3-isopropylmalate dehydratase small subunit (216 aa).

The protein belongs to the LeuD family. LeuD type 1 subfamily. In terms of assembly, heterodimer of LeuC and LeuD.

It catalyses the reaction (2R,3S)-3-isopropylmalate = (2S)-2-isopropylmalate. It functions in the pathway amino-acid biosynthesis; L-leucine biosynthesis; L-leucine from 3-methyl-2-oxobutanoate: step 2/4. In terms of biological role, catalyzes the isomerization between 2-isopropylmalate and 3-isopropylmalate, via the formation of 2-isopropylmaleate. The chain is 3-isopropylmalate dehydratase small subunit from Bordetella avium (strain 197N).